We begin with the raw amino-acid sequence, 467 residues long: ATP synthase subunit beta (467 aa).

An ATP-binding site is contributed by 153 to 160; that stretch reads GGAGVGKT.

It belongs to the ATPase alpha/beta chains family. In terms of assembly, F-type ATPases have 2 components, CF(1) - the catalytic core - and CF(0) - the membrane proton channel. CF(1) has five subunits: alpha(3), beta(3), gamma(1), delta(1), epsilon(1). CF(0) has three main subunits: a(1), b(2) and c(9-12). The alpha and beta chains form an alternating ring which encloses part of the gamma chain. CF(1) is attached to CF(0) by a central stalk formed by the gamma and epsilon chains, while a peripheral stalk is formed by the delta and b chains.

Its subcellular location is the cell membrane. The catalysed reaction is ATP + H2O + 4 H(+)(in) = ADP + phosphate + 5 H(+)(out). Functionally, produces ATP from ADP in the presence of a proton gradient across the membrane. The catalytic sites are hosted primarily by the beta subunits. This chain is ATP synthase subunit beta, found in Lactiplantibacillus plantarum (strain ATCC BAA-793 / NCIMB 8826 / WCFS1) (Lactobacillus plantarum).